The primary structure comprises 628 residues: Probable alpha-L-arabinofuranosidase A (628 aa).

The N-terminal stretch at 1-25 (MVAFSTISGLGALSLLFSIIESVDG) is a signal peptide. Asparagine 36, asparagine 51, asparagine 74, asparagine 152, asparagine 164, asparagine 260, asparagine 359, asparagine 404, and asparagine 493 each carry an N-linked (GlcNAc...) asparagine glycan.

It belongs to the glycosyl hydrolase 51 family.

The protein resides in the secreted. It catalyses the reaction Hydrolysis of terminal non-reducing alpha-L-arabinofuranoside residues in alpha-L-arabinosides.. The protein operates within glycan metabolism; L-arabinan degradation. Alpha-L-arabinofuranosidase involved in the degradation of arabinoxylan, a major component of plant hemicellulose. Acts only on small linear 1,5-alpha-linked L-arabinofuranosyl oligosaccharides. This chain is Probable alpha-L-arabinofuranosidase A (abfA), found in Aspergillus terreus (strain NIH 2624 / FGSC A1156).